A 611-amino-acid polypeptide reads, in one-letter code: Probable methyltransferase PMT19 (611 aa).

Over 1 to 15 (MNPSQQHLPKLCPKR) the chain is Cytoplasmic. Residues 16 to 36 (LFLFFTPFLLFSLYYILTTIK) form a helical; Signal-anchor for type II membrane protein membrane-spanning segment. Over 37 to 611 (TITISSQDRH…TILIVDNSIK (575 aa)) the chain is Lumenal. N-linked (GlcNAc...) asparagine glycosylation is found at Asn68, Asn97, Asn289, Asn408, Asn411, and Asn587.

Belongs to the methyltransferase superfamily.

It is found in the endoplasmic reticulum membrane. In Arabidopsis thaliana (Mouse-ear cress), this protein is Probable methyltransferase PMT19.